A 346-amino-acid polypeptide reads, in one-letter code: Histidinol-phosphate aminotransferase (346 aa).

K209 carries the post-translational modification N6-(pyridoxal phosphate)lysine.

The protein belongs to the class-II pyridoxal-phosphate-dependent aminotransferase family. Histidinol-phosphate aminotransferase subfamily. In terms of assembly, homodimer. The cofactor is pyridoxal 5'-phosphate.

It carries out the reaction L-histidinol phosphate + 2-oxoglutarate = 3-(imidazol-4-yl)-2-oxopropyl phosphate + L-glutamate. Its pathway is amino-acid biosynthesis; L-histidine biosynthesis; L-histidine from 5-phospho-alpha-D-ribose 1-diphosphate: step 7/9. The protein is Histidinol-phosphate aminotransferase of Vibrio vulnificus (strain CMCP6).